Reading from the N-terminus, the 284-residue chain is Pantothenate synthetase (284 aa).

30-37 (MGNLHDGH) contributes to the ATP binding site. The active-site Proton donor is His37. Position 61 (Gln61) interacts with (R)-pantoate. Gln61 contributes to the beta-alanine binding site. Position 149 to 152 (149 to 152 (GEKD)) interacts with ATP. Gln155 contributes to the (R)-pantoate binding site. Residues Ile178 and 186–189 (LSSR) contribute to the ATP site.

The protein belongs to the pantothenate synthetase family. In terms of assembly, homodimer.

Its subcellular location is the cytoplasm. It catalyses the reaction (R)-pantoate + beta-alanine + ATP = (R)-pantothenate + AMP + diphosphate + H(+). It participates in cofactor biosynthesis; (R)-pantothenate biosynthesis; (R)-pantothenate from (R)-pantoate and beta-alanine: step 1/1. Catalyzes the condensation of pantoate with beta-alanine in an ATP-dependent reaction via a pantoyl-adenylate intermediate. The polypeptide is Pantothenate synthetase (Salmonella newport (strain SL254)).